We begin with the raw amino-acid sequence, 261 residues long: uncharacterized protein (261 aa).

The protein belongs to the FwdC/FmdC family.

This is an uncharacterized protein from Methanocaldococcus jannaschii (strain ATCC 43067 / DSM 2661 / JAL-1 / JCM 10045 / NBRC 100440) (Methanococcus jannaschii).